Here is a 216-residue protein sequence, read N- to C-terminus: Small ribosomal subunit protein uS5 (216 aa).

Residues 1–55 (MDRKLENQKDLLNQDPKVELNSQSVAKNPLNSREVKPIQRRRPLRKNSRDKNSKP) are disordered. Residues 20 to 31 (LNSQSVAKNPLN) are compositionally biased toward polar residues. Positions 57 to 120 (FEERVIAIHR…KDAQNRLVSV (64 aa)) constitute an S5 DRBM domain.

Belongs to the universal ribosomal protein uS5 family. In terms of assembly, part of the 30S ribosomal subunit. Contacts proteins S4 and S8.

With S4 and S12 plays an important role in translational accuracy. Its function is as follows. Located at the back of the 30S subunit body where it stabilizes the conformation of the head with respect to the body. The chain is Small ribosomal subunit protein uS5 from Mesomycoplasma hyopneumoniae (strain J / ATCC 25934 / NCTC 10110) (Mycoplasma hyopneumoniae).